Consider the following 100-residue polypeptide: Large ribosomal subunit protein uL23 (100 aa).

It belongs to the universal ribosomal protein uL23 family. In terms of assembly, part of the 50S ribosomal subunit. Contacts protein L29, and trigger factor when it is bound to the ribosome.

Its function is as follows. One of the early assembly proteins it binds 23S rRNA. One of the proteins that surrounds the polypeptide exit tunnel on the outside of the ribosome. Forms the main docking site for trigger factor binding to the ribosome. This chain is Large ribosomal subunit protein uL23, found in Shewanella oneidensis (strain ATCC 700550 / JCM 31522 / CIP 106686 / LMG 19005 / NCIMB 14063 / MR-1).